A 342-amino-acid polypeptide reads, in one-letter code: Holliday junction branch migration complex subunit RuvB (342 aa).

Residues 1-181 form a large ATPase domain (RuvB-L) region; sequence MENRMVTPFD…FGMLCAMEFY (181 aa). ATP is bound by residues L20, R21, G62, K65, T66, T67, 128 to 130, R171, Y181, and R218; that span reads EDY. T66 is a Mg(2+) binding site. The interval 182–252 is small ATPAse domain (RuvB-S); that stretch reads TDEELMEIVV…GAKAALDLLE (71 aa). The segment at 255–342 is head domain (RuvB-H); the sequence is KEGLDKIDNK…KDNQVSIFNK (88 aa). DNA is bound by residues R310 and R315.

Belongs to the RuvB family. Homohexamer. Forms an RuvA(8)-RuvB(12)-Holliday junction (HJ) complex. HJ DNA is sandwiched between 2 RuvA tetramers; dsDNA enters through RuvA and exits via RuvB. An RuvB hexamer assembles on each DNA strand where it exits the tetramer. Each RuvB hexamer is contacted by two RuvA subunits (via domain III) on 2 adjacent RuvB subunits; this complex drives branch migration. In the full resolvosome a probable DNA-RuvA(4)-RuvB(12)-RuvC(2) complex forms which resolves the HJ.

Its subcellular location is the cytoplasm. The enzyme catalyses ATP + H2O = ADP + phosphate + H(+). Functionally, the RuvA-RuvB-RuvC complex processes Holliday junction (HJ) DNA during genetic recombination and DNA repair, while the RuvA-RuvB complex plays an important role in the rescue of blocked DNA replication forks via replication fork reversal (RFR). RuvA specifically binds to HJ cruciform DNA, conferring on it an open structure. The RuvB hexamer acts as an ATP-dependent pump, pulling dsDNA into and through the RuvAB complex. RuvB forms 2 homohexamers on either side of HJ DNA bound by 1 or 2 RuvA tetramers; 4 subunits per hexamer contact DNA at a time. Coordinated motions by a converter formed by DNA-disengaged RuvB subunits stimulates ATP hydrolysis and nucleotide exchange. Immobilization of the converter enables RuvB to convert the ATP-contained energy into a lever motion, pulling 2 nucleotides of DNA out of the RuvA tetramer per ATP hydrolyzed, thus driving DNA branch migration. The RuvB motors rotate together with the DNA substrate, which together with the progressing nucleotide cycle form the mechanistic basis for DNA recombination by continuous HJ branch migration. Branch migration allows RuvC to scan DNA until it finds its consensus sequence, where it cleaves and resolves cruciform DNA. This chain is Holliday junction branch migration complex subunit RuvB, found in Clostridium botulinum (strain ATCC 19397 / Type A).